The chain runs to 363 residues: UDP-N-acetylglucosamine--N-acetylmuramyl-(pentapeptide) pyrophosphoryl-undecaprenol N-acetylglucosamine transferase (363 aa).

Residues 10–12, N124, R161, S195, and Q291 each bind UDP-N-acetyl-alpha-D-glucosamine; that span reads TAG.

It belongs to the glycosyltransferase 28 family. MurG subfamily.

Its subcellular location is the cell membrane. The enzyme catalyses di-trans,octa-cis-undecaprenyl diphospho-N-acetyl-alpha-D-muramoyl-L-alanyl-D-glutamyl-meso-2,6-diaminopimeloyl-D-alanyl-D-alanine + UDP-N-acetyl-alpha-D-glucosamine = di-trans,octa-cis-undecaprenyl diphospho-[N-acetyl-alpha-D-glucosaminyl-(1-&gt;4)]-N-acetyl-alpha-D-muramoyl-L-alanyl-D-glutamyl-meso-2,6-diaminopimeloyl-D-alanyl-D-alanine + UDP + H(+). It functions in the pathway cell wall biogenesis; peptidoglycan biosynthesis. Functionally, cell wall formation. Catalyzes the transfer of a GlcNAc subunit on undecaprenyl-pyrophosphoryl-MurNAc-pentapeptide (lipid intermediate I) to form undecaprenyl-pyrophosphoryl-MurNAc-(pentapeptide)GlcNAc (lipid intermediate II). This Streptomyces avermitilis (strain ATCC 31267 / DSM 46492 / JCM 5070 / NBRC 14893 / NCIMB 12804 / NRRL 8165 / MA-4680) protein is UDP-N-acetylglucosamine--N-acetylmuramyl-(pentapeptide) pyrophosphoryl-undecaprenol N-acetylglucosamine transferase.